The chain runs to 31 residues: Cytochrome b6-f complex subunit 6 (31 aa).

A helical transmembrane segment spans residues 4–24; it reads LTSYFGFLLAALTITSVLFIG.

The protein belongs to the PetL family. As to quaternary structure, the 4 large subunits of the cytochrome b6-f complex are cytochrome b6, subunit IV (17 kDa polypeptide, PetD), cytochrome f and the Rieske protein, while the 4 small subunits are PetG, PetL, PetM and PetN. The complex functions as a dimer.

It is found in the plastid. The protein resides in the chloroplast thylakoid membrane. In terms of biological role, component of the cytochrome b6-f complex, which mediates electron transfer between photosystem II (PSII) and photosystem I (PSI), cyclic electron flow around PSI, and state transitions. PetL is important for photoautotrophic growth as well as for electron transfer efficiency and stability of the cytochrome b6-f complex. In Silene conica (Striped corn catchfly), this protein is Cytochrome b6-f complex subunit 6.